Here is an 89-residue protein sequence, read N- to C-terminus: Large ribosomal subunit protein uL23cz/uL23cy (89 aa).

Belongs to the universal ribosomal protein uL23 family. As to quaternary structure, part of the 50S ribosomal subunit.

The protein localises to the plastid. Its subcellular location is the chloroplast. Functionally, binds to 23S rRNA. The protein is Large ribosomal subunit protein uL23cz/uL23cy (rpl23-A) of Calycanthus floridus var. glaucus (Eastern sweetshrub).